The following is a 376-amino-acid chain: Chaperone protein DnaJ (376 aa).

The J domain occupies 5–70; it reads DYYETLGVQK…EKRAAYDQYG (66 aa). The CR-type zinc finger occupies 133 to 211; sequence GTTKDIKINT…CHGDGRVHKK (79 aa). Zn(2+) contacts are provided by Cys146, Cys149, Cys163, Cys166, Cys185, Cys188, Cys199, and Cys202. 4 CXXCXGXG motif repeats span residues 146–153, 163–170, 185–192, and 199–206; these read CDHCDGSG, CPTCHGHG, CPTCQGSG, and CKHCHGDG.

Belongs to the DnaJ family. As to quaternary structure, homodimer. Zn(2+) is required as a cofactor.

It is found in the cytoplasm. Its function is as follows. Participates actively in the response to hyperosmotic and heat shock by preventing the aggregation of stress-denatured proteins and by disaggregating proteins, also in an autonomous, DnaK-independent fashion. Unfolded proteins bind initially to DnaJ; upon interaction with the DnaJ-bound protein, DnaK hydrolyzes its bound ATP, resulting in the formation of a stable complex. GrpE releases ADP from DnaK; ATP binding to DnaK triggers the release of the substrate protein, thus completing the reaction cycle. Several rounds of ATP-dependent interactions between DnaJ, DnaK and GrpE are required for fully efficient folding. Also involved, together with DnaK and GrpE, in the DNA replication of plasmids through activation of initiation proteins. The protein is Chaperone protein DnaJ of Mannheimia succiniciproducens (strain KCTC 0769BP / MBEL55E).